The chain runs to 303 residues: Oxygen-dependent coproporphyrinogen-III oxidase (303 aa).

Serine 93 is a binding site for substrate. A divalent metal cation is bound by residues histidine 97 and histidine 107. Residue histidine 107 is the Proton donor of the active site. 109 to 111 (NVR) is a substrate binding site. Residues histidine 146 and histidine 176 each coordinate a divalent metal cation. The segment at 241 to 276 (YVEFNLVYDRGTLFGLQSGGRTESILMSLPPQVRWG) is important for dimerization. A substrate-binding site is contributed by 259–261 (GGR).

The protein belongs to the aerobic coproporphyrinogen-III oxidase family. Homodimer. The cofactor is a divalent metal cation.

It is found in the cytoplasm. The enzyme catalyses coproporphyrinogen III + O2 + 2 H(+) = protoporphyrinogen IX + 2 CO2 + 2 H2O. It functions in the pathway porphyrin-containing compound metabolism; protoporphyrin-IX biosynthesis; protoporphyrinogen-IX from coproporphyrinogen-III (O2 route): step 1/1. Involved in the heme biosynthesis. Catalyzes the aerobic oxidative decarboxylation of propionate groups of rings A and B of coproporphyrinogen-III to yield the vinyl groups in protoporphyrinogen-IX. The protein is Oxygen-dependent coproporphyrinogen-III oxidase of Pseudomonas putida (strain ATCC 700007 / DSM 6899 / JCM 31910 / BCRC 17059 / LMG 24140 / F1).